Reading from the N-terminus, the 373-residue chain is Glycerol-3-phosphate dehydrogenase [NAD(+)] 2 (373 aa).

At serine 15 the chain carries Phosphoserine. NAD(+) contacts are provided by residues 31–36, phenylalanine 123, lysine 146, and alanine 179; that span reads GSGNWG. Lysine 146 contributes to the substrate binding site. Lysine 236 acts as the Proton acceptor in catalysis. Positions 300 and 329 each coordinate NAD(+). 300 to 301 lines the substrate pocket; it reads RN.

The protein belongs to the NAD-dependent glycerol-3-phosphate dehydrogenase family.

The protein resides in the cytoplasm. It carries out the reaction sn-glycerol 3-phosphate + NAD(+) = dihydroxyacetone phosphate + NADH + H(+). The polypeptide is Glycerol-3-phosphate dehydrogenase [NAD(+)] 2 (gpd2) (Schizosaccharomyces pombe (strain 972 / ATCC 24843) (Fission yeast)).